Reading from the N-terminus, the 241-residue chain is 1-(5-phosphoribosyl)-5-[(5-phosphoribosylamino)methylideneamino] imidazole-4-carboxamide isomerase (241 aa).

Residue D8 is the Proton acceptor of the active site. The active-site Proton donor is D129.

This sequence belongs to the HisA/HisF family.

Its subcellular location is the cytoplasm. The enzyme catalyses 1-(5-phospho-beta-D-ribosyl)-5-[(5-phospho-beta-D-ribosylamino)methylideneamino]imidazole-4-carboxamide = 5-[(5-phospho-1-deoxy-D-ribulos-1-ylimino)methylamino]-1-(5-phospho-beta-D-ribosyl)imidazole-4-carboxamide. Its pathway is amino-acid biosynthesis; L-histidine biosynthesis; L-histidine from 5-phospho-alpha-D-ribose 1-diphosphate: step 4/9. In Caulobacter sp. (strain K31), this protein is 1-(5-phosphoribosyl)-5-[(5-phosphoribosylamino)methylideneamino] imidazole-4-carboxamide isomerase.